A 2890-amino-acid chain; its full sequence is Bifunctional DNA-directed RNA polymerase subunit beta-beta' (2890 aa).

Residues 1–1377 form a DNA-directed RNA polymerase subunit beta region; sequence MSKKIPLKNR…DINIFGDDVD (1377 aa). A DNA-directed RNA polymerase subunit beta' region spans residues 1384-2890; the sequence is PIVIKEDDRP…LRTLEDDPKF (1507 aa). Residues Cys1449, Cys1451, Cys1465, and Cys1468 each contribute to the Zn(2+) site. Residues Asp1849, Asp1851, and Asp1853 each contribute to the Mg(2+) site. Positions 2179, 2253, 2260, and 2263 each coordinate Zn(2+).

This sequence in the N-terminal section; belongs to the RNA polymerase beta chain family. The protein in the C-terminal section; belongs to the RNA polymerase beta' chain family. As to quaternary structure, the RNAP catalytic core consists of 2 alpha, 1 beta/beta' and 1 omega subunit. When a sigma factor is associated with the core the holoenzyme is formed, which can initiate transcription. Mg(2+) serves as cofactor. Zn(2+) is required as a cofactor.

The enzyme catalyses RNA(n) + a ribonucleoside 5'-triphosphate = RNA(n+1) + diphosphate. Its function is as follows. DNA-dependent RNA polymerase catalyzes the transcription of DNA into RNA using the four ribonucleoside triphosphates as substrates. This chain is Bifunctional DNA-directed RNA polymerase subunit beta-beta' (rpoBC), found in Helicobacter pylori (strain Shi470).